A 139-amino-acid chain; its full sequence is 3-hydroxyacyl-[acyl-carrier-protein] dehydratase FabZ (139 aa).

Residue H46 is part of the active site.

This sequence belongs to the thioester dehydratase family. FabZ subfamily.

It localises to the cytoplasm. It carries out the reaction a (3R)-hydroxyacyl-[ACP] = a (2E)-enoyl-[ACP] + H2O. Functionally, involved in unsaturated fatty acids biosynthesis. Catalyzes the dehydration of short chain beta-hydroxyacyl-ACPs and long chain saturated and unsaturated beta-hydroxyacyl-ACPs. In Streptococcus pyogenes serotype M3 (strain ATCC BAA-595 / MGAS315), this protein is 3-hydroxyacyl-[acyl-carrier-protein] dehydratase FabZ.